The sequence spans 184 residues: MSGARAAPGAAGNGAVRGLRVDGLPPLPKSLSGLLHSASGGGASGGWRHLERLYAQKSRIQDELSRGGPGGGGARAAALPAKPPNLDAALALLRKEMVGLRQLDMSLLCQLYSLYESIQEYKGACQAASSPDCTYALENGFFDEEEEYFQEQNSLHDRRDRGPPRDLSLPVSSLSSSDWILESI.

The interval 148–184 (YFQEQNSLHDRRDRGPPRDLSLPVSSLSSSDWILESI) is disordered. Residues 154 to 164 (SLHDRRDRGPP) show a composition bias toward basic and acidic residues. The span at 167 to 184 (LSLPVSSLSSSDWILESI) shows a compositional bias: low complexity.

Belongs to the FAM89 family.

In Homo sapiens (Human), this protein is Protein FAM89A (FAM89A).